A 75-amino-acid polypeptide reads, in one-letter code: Small ribosomal subunit protein bS18 (75 aa).

The protein belongs to the bacterial ribosomal protein bS18 family. As to quaternary structure, part of the 30S ribosomal subunit. Forms a tight heterodimer with protein bS6.

Its function is as follows. Binds as a heterodimer with protein bS6 to the central domain of the 16S rRNA, where it helps stabilize the platform of the 30S subunit. The polypeptide is Small ribosomal subunit protein bS18 (Pasteurella multocida (strain Pm70)).